The primary structure comprises 347 residues: Quinolinate synthase (347 aa).

Positions 47 and 68 each coordinate iminosuccinate. A [4Fe-4S] cluster-binding site is contributed by C113. Iminosuccinate contacts are provided by residues 139-141 (YAN) and S156. C200 serves as a coordination point for [4Fe-4S] cluster. Iminosuccinate contacts are provided by residues 226–228 (HPE) and T243. Residue C297 participates in [4Fe-4S] cluster binding.

The protein belongs to the quinolinate synthase family. Type 1 subfamily. It depends on [4Fe-4S] cluster as a cofactor.

Its subcellular location is the cytoplasm. The catalysed reaction is iminosuccinate + dihydroxyacetone phosphate = quinolinate + phosphate + 2 H2O + H(+). It functions in the pathway cofactor biosynthesis; NAD(+) biosynthesis; quinolinate from iminoaspartate: step 1/1. In terms of biological role, catalyzes the condensation of iminoaspartate with dihydroxyacetone phosphate to form quinolinate. The chain is Quinolinate synthase from Salmonella gallinarum (strain 287/91 / NCTC 13346).